The primary structure comprises 374 residues: 2-oxoglutarate-Fe(II) type oxidoreductase ppzC (374 aa).

The segment at 111 to 131 is disordered; that stretch reads KKGPFDSGYRGPGTQRVNPDE. The Fe2OG dioxygenase domain occupies 220–330; that stretch reads YPDASLEINF…RVSMPFFWGF (111 aa). Residues His254, Asp256, and His311 each contribute to the Fe cation site. 2-oxoglutarate is bound at residue Arg321.

The protein belongs to the iron/ascorbate-dependent oxidoreductase family. Fe(2+) is required as a cofactor.

The enzyme catalyses peramine + 2-oxoglutarate + O2 = 8-hydroxyperamine + succinate + CO2. Its pathway is secondary metabolite biosynthesis. Its function is as follows. 2-oxoglutarate-Fe(II) type oxidoreductase; part of the gene cluster that mediates the biosynthesis of pyrrolopyrazines, secondary metabolites showing insecticidal activity. Within the pathway, ppzC uses peramine as substrate for hydroxylation to yield the novel analog 8-hydroxyperamine. The single multifunctional NRPS ppzA is sufficient to produce peramine via condensation of 1-pyrroline-5-carboxylate and arginine, N-methylation of the alpha-amino group of arginine and reduction of the thioester and the cyclization to form an iminium ion resulting in release from the peptide synthetase. Deprotonation of this intermediate and oxidation of the pyrroline ring would give rise to peramine. In Epichloe species that produce only peramine, the peramine synthetase gene is not localized in a gene cluster, in contrast to Metarhizium species that contain additional pyrrolopyrazine biosynthesis genes. The 2-oxoglutarate-Fe(II) type oxidoreductase ppzC hydroxylates peramine to yield the newly identified compound 8-hydroxyperamine whereas ppzD converts L-proline into trans-4-hydroxy-L-proline, a precursor of peramine biosynthesis. This Metarhizium majus (strain ARSEF 297) protein is 2-oxoglutarate-Fe(II) type oxidoreductase ppzC (ppzC).